The sequence spans 306 residues: Nucleotide-binding protein amb4396 (306 aa).

The span at 1–14 shows a compositional bias: polar residues; it reads MSDLHSSPTDQTSA. Residues 1–20 form a disordered region; that stretch reads MSDLHSSPTDQTSAPAHAGG. Residue 29 to 36 coordinates ATP; sequence GMSGAGKT. 77–80 is a GTP binding site; it reads DIRT.

This sequence belongs to the RapZ-like family.

Functionally, displays ATPase and GTPase activities. This is Nucleotide-binding protein amb4396 from Paramagnetospirillum magneticum (strain ATCC 700264 / AMB-1) (Magnetospirillum magneticum).